Reading from the N-terminus, the 404-residue chain is Pleckstrin homology domain-containing family A member 1 (404 aa).

PH domains follow at residues 7–112 (QNRI…KAIK) and 191–289 (AVIK…GAIV). Disordered stretches follow at residues 291–332 (QRGP…RSNS) and 355–404 (NFKV…VSDV). The span at 316-332 (TNAATATSHSTASRSNS) shows a compositional bias: low complexity. Residues serine 332 and serine 362 each carry the phosphoserine modification.

In terms of assembly, interacts with MPDZ and PTPN13. Highly expressed in skeletal muscle, thymus, pancreas, placenta and lung. Detected at low levels in brain, heart, peripheral blood leukocytes, testis, ovary, spinal cord, thyroid, kidney, liver, small intestine and colon.

The protein resides in the cytoplasm. The protein localises to the cell membrane. It is found in the nucleus. Its function is as follows. Binds specifically to phosphatidylinositol 3,4-diphosphate (PtdIns3,4P2), but not to other phosphoinositides. May recruit other proteins to the plasma membrane. This Homo sapiens (Human) protein is Pleckstrin homology domain-containing family A member 1 (PLEKHA1).